The primary structure comprises 171 residues: MQCPHCHHNGSRVVDSRPTDDGRVIRRRRECENCGFRFTTFERVEATPLLVIKKNGAREEFNREKVLRGIIRSAEKRPVSMETMTGVVDDVENKVRSLGENEISSQVIGEYVMEQLADIDEISYIRFASVYRQFKDMHVFLNELQDMMERDKVKLAKPSAKTTHAPKRKKD.

Basic residues predominate over residues 1 to 10 (MQCPHCHHNG). Residues 1–21 (MQCPHCHHNGSRVVDSRPTDD) are disordered. A zinc finger spans residues 3-34 (CPHCHHNGSRVVDSRPTDDGRVIRRRRECENC). Residues 49 to 139 (LLVIKKNGAR…VYRQFKDMHV (91 aa)) form the ATP-cone domain. Residues 152 to 171 (KVKLAKPSAKTTHAPKRKKD) form a disordered region.

It belongs to the NrdR family. Zn(2+) is required as a cofactor.

Functionally, negatively regulates transcription of bacterial ribonucleotide reductase nrd genes and operons by binding to NrdR-boxes. This is Transcriptional repressor NrdR from Lactiplantibacillus plantarum (strain ATCC BAA-793 / NCIMB 8826 / WCFS1) (Lactobacillus plantarum).